Consider the following 492-residue polypeptide: Transmembrane protease serine 2 (492 aa).

Residues 1 to 84 (MALNSGSPPA…TVCTSKTKKA (84 aa)) lie on the Cytoplasmic side of the membrane. The helical; Signal-anchor for type II membrane protein transmembrane segment at 85-105 (LCITLTLGTFLVGAALAAGLL) threads the bilayer. The Extracellular segment spans residues 106-492 (WKFMGSKCSN…WIYRQMRADG (387 aa)). Intrachain disulfides connect Cys113–Cys126, Cys120–Cys139, Cys133–Cys148, Cys172–Cys231, Cys185–Cys241, Cys244–Cys365, Cys281–Cys297, Cys410–Cys426, and Cys437–Cys465. The 31-residue stretch at 118–148 (IECDSSGTCINPSNWCDGVSHCPGGEDENRC) folds into the LDL-receptor class A domain. Ca(2+)-binding residues include Asn131, Asp134, Val136, Asp144, and Glu145. The 94-residue stretch at 149 to 242 (VRLYGPNFIL…SKAVVSLRCI (94 aa)) folds into the SRCR domain. Asn213 and Asn249 each carry an N-linked (GlcNAc...) asparagine glycan. The Peptidase S1 domain maps to 256–492 (IVGGESALPG…WIYRQMRADG (237 aa)). Active-site charge relay system residues include His296 and Asp345. The segment at 340–470 (KTKNNDIALM…WGSGCAKAYR (131 aa)) is HKU1-CoV S protein-binding. Ser441 serves as the catalytic Charge relay system.

It belongs to the peptidase S1 family. In terms of assembly, the catalytically active form interacts with ACE2. Proteolytically processed; by an autocatalytic mechanism. Autocleavage induces active conformation. In terms of tissue distribution, expressed in several tissues that comprise large populations of epithelial cells with the highest level of transcripts measured in the prostate gland. Expressed in type II pneumocytes in the lung (at protein level). Expressed strongly in small intestine. Also expressed in colon, stomach and salivary gland. Coexpressed with ACE2 within lung type II pneumocytes, ileal absorptive enterocytes, intestinal epithelial cells, cornea, gallbladder and nasal goblet secretory cells.

It localises to the cell membrane. The protein resides in the secreted. It catalyses the reaction The enzyme cleaves angiotensin-converting enzyme 2 (EC 3.4.17.23) and cleaves influenzea A and B virus and coronavirus spike glycoproteins at arginine residues.. Its function is as follows. Plasma membrane-anchored serine protease that cleaves at arginine residues. Participates in proteolytic cascades of relevance for the normal physiologic function of the prostate. Androgen-induced TMPRSS2 activates several substrates that include pro-hepatocyte growth factor/HGF, the protease activated receptor-2/F2RL1 or matriptase/ST14 leading to extracellular matrix disruption and metastasis of prostate cancer cells. In addition, activates trigeminal neurons and contribute to both spontaneous pain and mechanical allodynia. (Microbial infection) Facilitates human coronaviruses SARS-CoV and SARS-CoV-2 infections via two independent mechanisms, proteolytic cleavage of ACE2 receptor which promotes viral uptake, and cleavage of coronavirus spike glycoproteins which activates the glycoprotein for host cell entry. The cleavage of SARS-COV2 spike glycoprotein occurs between the S2 and S2' site. Upon SARS-CoV-2 infection, increases syncytia formation by accelerating the fusion process. Proteolytically cleaves and activates the spike glycoproteins of human coronavirus 229E (HCoV-229E) and human coronavirus EMC (HCoV-EMC) and the fusion glycoproteins F0 of Sendai virus (SeV), human metapneumovirus (HMPV), human parainfluenza 1, 2, 3, 4a and 4b viruses (HPIV). Essential for spread and pathogenesis of influenza A virus (strains H1N1, H3N2 and H7N9); involved in proteolytic cleavage and activation of hemagglutinin (HA) protein which is essential for viral infectivity. Functionally, (Microbial infection) Receptor for human coronavirus HKU1-CoV, acts synergistically with disialoside glycans to facilitate the entry of the virus. After binding to cell-surface disialoside glycans, the viral S protein interacts with the inactive form of TMPRSS2 and inhibits its protease activity. The polypeptide is Transmembrane protease serine 2 (Homo sapiens (Human)).